Reading from the N-terminus, the 303-residue chain is Methionyl-tRNA formyltransferase (303 aa).

Residue 108–111 (SDLP) coordinates (6S)-5,6,7,8-tetrahydrofolate.

It belongs to the Fmt family.

The enzyme catalyses L-methionyl-tRNA(fMet) + (6R)-10-formyltetrahydrofolate = N-formyl-L-methionyl-tRNA(fMet) + (6S)-5,6,7,8-tetrahydrofolate + H(+). Its function is as follows. Attaches a formyl group to the free amino group of methionyl-tRNA(fMet). The formyl group appears to play a dual role in the initiator identity of N-formylmethionyl-tRNA by promoting its recognition by IF2 and preventing the misappropriation of this tRNA by the elongation apparatus. The protein is Methionyl-tRNA formyltransferase of Rickettsia felis (strain ATCC VR-1525 / URRWXCal2) (Rickettsia azadi).